The sequence spans 223 residues: Deoxyribose-phosphate aldolase (223 aa).

Catalysis depends on Asp-89, which acts as the Proton donor/acceptor. Lys-152 acts as the Schiff-base intermediate with acetaldehyde in catalysis. Lys-181 acts as the Proton donor/acceptor in catalysis.

It belongs to the DeoC/FbaB aldolase family. DeoC type 1 subfamily.

It is found in the cytoplasm. It catalyses the reaction 2-deoxy-D-ribose 5-phosphate = D-glyceraldehyde 3-phosphate + acetaldehyde. It functions in the pathway carbohydrate degradation; 2-deoxy-D-ribose 1-phosphate degradation; D-glyceraldehyde 3-phosphate and acetaldehyde from 2-deoxy-alpha-D-ribose 1-phosphate: step 2/2. In terms of biological role, catalyzes a reversible aldol reaction between acetaldehyde and D-glyceraldehyde 3-phosphate to generate 2-deoxy-D-ribose 5-phosphate. The chain is Deoxyribose-phosphate aldolase from Listeria welshimeri serovar 6b (strain ATCC 35897 / DSM 20650 / CCUG 15529 / CIP 8149 / NCTC 11857 / SLCC 5334 / V8).